The sequence spans 338 residues: Heat-inducible transcription repressor HrcA (338 aa).

This sequence belongs to the HrcA family.

In terms of biological role, negative regulator of class I heat shock genes (grpE-dnaK-dnaJ and groELS operons). Prevents heat-shock induction of these operons. The polypeptide is Heat-inducible transcription repressor HrcA (Bacillus cereus (strain 03BB102)).